The following is a 441-amino-acid chain: ATP-dependent protease ATPase subunit HslU (441 aa).

ATP is bound by residues isoleucine 18 and 60–65; that span reads GVGKTE. Residues 131–158 form a disordered region; that stretch reads ILDALLPRPRGSEYDHARDESSTRQTFR. Basic and acidic residues predominate over residues 140 to 152; that stretch reads RGSEYDHARDESS. Residues aspartate 254, glutamate 320, and arginine 392 each contribute to the ATP site.

This sequence belongs to the ClpX chaperone family. HslU subfamily. As to quaternary structure, a double ring-shaped homohexamer of HslV is capped on each side by a ring-shaped HslU homohexamer. The assembly of the HslU/HslV complex is dependent on binding of ATP.

The protein localises to the cytoplasm. In terms of biological role, ATPase subunit of a proteasome-like degradation complex; this subunit has chaperone activity. The binding of ATP and its subsequent hydrolysis by HslU are essential for unfolding of protein substrates subsequently hydrolyzed by HslV. HslU recognizes the N-terminal part of its protein substrates and unfolds these before they are guided to HslV for hydrolysis. This Chromohalobacter salexigens (strain ATCC BAA-138 / DSM 3043 / CIP 106854 / NCIMB 13768 / 1H11) protein is ATP-dependent protease ATPase subunit HslU.